Consider the following 258-residue polypeptide: Trans-aconitate 2-methyltransferase (258 aa).

The protein belongs to the methyltransferase superfamily. Tam family.

It localises to the cytoplasm. The enzyme catalyses trans-aconitate + S-adenosyl-L-methionine = (E)-3-(methoxycarbonyl)pent-2-enedioate + S-adenosyl-L-homocysteine. Catalyzes the S-adenosylmethionine monomethyl esterification of trans-aconitate. The chain is Trans-aconitate 2-methyltransferase from Yersinia pestis bv. Antiqua (strain Antiqua).